We begin with the raw amino-acid sequence, 772 residues long: uncharacterized protein (772 aa).

2 helical membrane passes run 16 to 36 (LITF…LFSY) and 301 to 321 (IGWI…LFSW). One can recognise an HTH araC/xylS-type domain in the interval 670 to 768 (DNIIHIIHHE…GITPGNYRQQ (99 aa)). 2 consecutive DNA-binding regions (H-T-H motif) follow at residues 687 to 708 (DEIA…KKEM) and 735 to 758 (VKDI…KKLE).

It is found in the cell membrane. This is an uncharacterized protein from Bacillus subtilis (strain 168).